We begin with the raw amino-acid sequence, 368 residues long: Xaa-Pro dipeptidase (368 aa).

Mn(2+)-binding residues include aspartate 223, aspartate 234, histidine 298, glutamate 327, and glutamate 341.

The protein belongs to the peptidase M24B family. The cofactor is Mn(2+).

The protein resides in the cytoplasm. The enzyme catalyses Xaa-L-Pro dipeptide + H2O = an L-alpha-amino acid + L-proline. The protein is Xaa-Pro dipeptidase (pepQ) of Lactobacillus helveticus (Lactobacillus suntoryeus).